A 118-amino-acid polypeptide reads, in one-letter code: Ribonuclease P protein component (118 aa).

The protein belongs to the RnpA family. Consists of a catalytic RNA component (M1 or rnpB) and a protein subunit.

The catalysed reaction is Endonucleolytic cleavage of RNA, removing 5'-extranucleotides from tRNA precursor.. In terms of biological role, RNaseP catalyzes the removal of the 5'-leader sequence from pre-tRNA to produce the mature 5'-terminus. It can also cleave other RNA substrates such as 4.5S RNA. The protein component plays an auxiliary but essential role in vivo by binding to the 5'-leader sequence and broadening the substrate specificity of the ribozyme. The protein is Ribonuclease P protein component of Rickettsia rickettsii (strain Iowa).